The chain runs to 253 residues: Ubiquinone biosynthesis O-methyltransferase (253 aa).

Positions 41, 72, 93, and 136 each coordinate S-adenosyl-L-methionine.

The protein belongs to the methyltransferase superfamily. UbiG/COQ3 family.

It carries out the reaction a 3-demethylubiquinol + S-adenosyl-L-methionine = a ubiquinol + S-adenosyl-L-homocysteine + H(+). It catalyses the reaction a 3-(all-trans-polyprenyl)benzene-1,2-diol + S-adenosyl-L-methionine = a 2-methoxy-6-(all-trans-polyprenyl)phenol + S-adenosyl-L-homocysteine + H(+). It participates in cofactor biosynthesis; ubiquinone biosynthesis. Its function is as follows. O-methyltransferase that catalyzes the 2 O-methylation steps in the ubiquinone biosynthetic pathway. The sequence is that of Ubiquinone biosynthesis O-methyltransferase from Azorhizobium caulinodans (strain ATCC 43989 / DSM 5975 / JCM 20966 / LMG 6465 / NBRC 14845 / NCIMB 13405 / ORS 571).